Consider the following 848-residue polypeptide: MSENNNDKITAKKTLTLKRSGSETNTVKQNFNHSRTKAVVVETKRRKIARPDEKTEMPQPITKPHVAPPRSKPRIEKPVLVTPTAQSNLSSTEMDARLRALEEAHIQDEIIRKQAAEKQIAERQAAEKQAKESEEGLHLQKTHKEKIQKSSSNTTKPTPLFSSTVSPIESIEAALTLKNTAASKRKADENDDDEKYNRRANLSKSEIRAPKIIKGTDERRRGKLTLNSALDEEGNSRGRSMAAMRRRQEKFKRAQNQEPREKISREVILPETITIQELAQRMAERSVDVIKFLMKQEQMMKPGDVIDADIAELIAIEFGHTVKRVSESDIEEGIFNVDDDPQKMKTRPPIVTIMGHVDHGKTSLLDAIRKANVVSSEAGGITQHIGAYQVEQNGQKITFIDTPGHAAFTAMRARGAQITDIAVLVVAADDSVMPQTIESINHAKAANVPIIVAINKIDKPTADAQKVRTELLQHEVFVETMGGETLEVEVSAKTGQNLDKLLEAILLQAEILDLKADSERTADGIVIEAKLDQGRGSVATVLVQKGTLHLSDIIVAGNEWGRIRALIDDHGNHIKTASPSTPVEILGMQGTPQAGDRFAVVAHEAKAREIAEYRQRLARDKAAARKTGSRSSLEQMMTKLQTVGVKEFSLIIKGDVQGSIEAITAALEKLGNEEVQTRIVHSGAGGITESDISLAETSNSVVIGFNVRANKQVRDLAETQGIEIRYYNIIYDLVDDIKAAMSGLLSPEKRETFLGNAEILEIFNITKIGKVAGCQVTEGKIERGAGVRLIRDNIVIHEGKLKTLKRFKDEVNEVQIGQECGIAFEKYEDMRAGDTIEIFRVEHVNRTL.

Residues 1-10 (MSENNNDKIT) show a composition bias toward basic and acidic residues. Disordered regions lie at residues 1 to 79 (MSEN…EKPV) and 121 to 163 (AERQ…LFSS). A compositionally biased stretch (polar residues) spans 17 to 33 (LKRSGSETNTVKQNFNH). Positions 121 to 138 (AERQAAEKQAKESEEGLH) are enriched in basic and acidic residues. Residues 149-163 (KSSSNTTKPTPLFSS) show a composition bias toward polar residues. The tr-type G domain occupies 346 to 513 (TRPPIVTIMG…AILLQAEILD (168 aa)). Positions 355-362 (GHVDHGKT) are G1. 355–362 (GHVDHGKT) is a GTP binding site. Residues 380–384 (GITQH) are G2. Positions 401–404 (DTPG) are G3. Residues 401-405 (DTPGH) and 455-458 (NKID) contribute to the GTP site. Positions 455–458 (NKID) are G4. The tract at residues 491–493 (SAK) is G5.

The protein belongs to the TRAFAC class translation factor GTPase superfamily. Classic translation factor GTPase family. IF-2 subfamily.

The protein resides in the cytoplasm. Functionally, one of the essential components for the initiation of protein synthesis. Protects formylmethionyl-tRNA from spontaneous hydrolysis and promotes its binding to the 30S ribosomal subunits. Also involved in the hydrolysis of GTP during the formation of the 70S ribosomal complex. The protein is Translation initiation factor IF-2 of Bartonella bacilliformis (strain ATCC 35685 / KC583 / Herrer 020/F12,63).